Consider the following 249-residue polypeptide: MILELDCGNSFIKWRITTKSDAAVVSVGVVDSDAALLEHLRNLSDTTFSDCRLVSVRSAEETARLVSVLTNAFSVTPVCAVPARELGGVVNGYDDFERLGLDRWLAFVGAYHLVKRACLVIDLGTAVTSDFVDAGGAHLGGFICPGMPLMRNQLRTHTRRIRYDDTEAERALVRLVPGRATAEAVERGCSLMLRGFALTQVEIARGYWGDDFAIFVTGGDAALVADVLPGARIVPDLVFVGLALACPLR.

6-13 is an ATP binding site; sequence DCGNSFIK. Substrate contacts are provided by residues Tyr-93 and 100-103; that span reads GLDR. The Proton acceptor role is filled by Asp-102. Asp-122 provides a ligand contact to K(+). Position 125 (Thr-125) interacts with ATP. Thr-181 contacts substrate.

It belongs to the type III pantothenate kinase family. As to quaternary structure, homodimer. Requires NH4(+) as cofactor. K(+) is required as a cofactor.

It localises to the cytoplasm. The catalysed reaction is (R)-pantothenate + ATP = (R)-4'-phosphopantothenate + ADP + H(+). It participates in cofactor biosynthesis; coenzyme A biosynthesis; CoA from (R)-pantothenate: step 1/5. Functionally, catalyzes the phosphorylation of pantothenate (Pan), the first step in CoA biosynthesis. The polypeptide is Type III pantothenate kinase (Pseudomonas syringae pv. syringae (strain B728a)).